The chain runs to 489 residues: Betaine aldehyde dehydrogenase (489 aa).

K(+)-binding residues include Thr26 and Asp93. An NAD(+)-binding site is contributed by 150 to 152 (GAW). Lys162 acts as the Charge relay system in catalysis. 176–179 (KPSE) is a binding site for NAD(+). Val180 provides a ligand contact to K(+). 229–232 (GVET) contacts NAD(+). Leu245 serves as a coordination point for K(+). The Proton acceptor role is filled by Glu251. Gly253, Cys285, and Glu386 together coordinate NAD(+). Cys285 serves as the catalytic Nucleophile. Cys285 is subject to Cysteine sulfenic acid (-SOH). K(+) contacts are provided by Lys456 and Gly459. The active-site Charge relay system is the Glu463.

It belongs to the aldehyde dehydrogenase family. In terms of assembly, dimer of dimers. K(+) serves as cofactor.

The catalysed reaction is betaine aldehyde + NAD(+) + H2O = glycine betaine + NADH + 2 H(+). The protein operates within amine and polyamine biosynthesis; betaine biosynthesis via choline pathway; betaine from betaine aldehyde: step 1/1. In terms of biological role, involved in the biosynthesis of the osmoprotectant glycine betaine. Catalyzes the irreversible oxidation of betaine aldehyde to the corresponding acid. This chain is Betaine aldehyde dehydrogenase, found in Burkholderia cenocepacia (strain ATCC BAA-245 / DSM 16553 / LMG 16656 / NCTC 13227 / J2315 / CF5610) (Burkholderia cepacia (strain J2315)).